Consider the following 135-residue polypeptide: Small ribosomal subunit protein uS8 (135 aa).

It belongs to the universal ribosomal protein uS8 family. As to quaternary structure, part of the 30S ribosomal subunit. Contacts proteins S5 and S12.

Functionally, one of the primary rRNA binding proteins, it binds directly to 16S rRNA central domain where it helps coordinate assembly of the platform of the 30S subunit. This chain is Small ribosomal subunit protein uS8, found in Cutibacterium acnes (strain DSM 16379 / KPA171202) (Propionibacterium acnes).